Consider the following 95-residue polypeptide: Small ribosomal subunit protein bS20c (95 aa).

The segment at 76–95 is disordered; it reads NGSAKKAKLTKRLKEKKISL. Positions 80 to 95 are enriched in basic residues; that stretch reads KKAKLTKRLKEKKISL.

It belongs to the bacterial ribosomal protein bS20 family.

It is found in the plastid. It localises to the chloroplast. Binds directly to 16S ribosomal RNA. The sequence is that of Small ribosomal subunit protein bS20c from Guillardia theta (Cryptophyte).